The chain runs to 183 residues: DNA-directed RNA polymerase subunit Rpo7 (183 aa).

Residues His-82–Lys-164 form the S1 motif domain.

Belongs to the eukaryotic RPB7/RPC8 RNA polymerase subunit family. In terms of assembly, part of the 13-subunit RNA polymerase complex. Forms a stalk with Rpo4 that extends from the main structure.

It is found in the cytoplasm. It catalyses the reaction RNA(n) + a ribonucleoside 5'-triphosphate = RNA(n+1) + diphosphate. Its function is as follows. DNA-dependent RNA polymerase (RNAP) catalyzes the transcription of DNA into RNA using the four ribonucleoside triphosphates as substrates. Functionally, reconstitution experiments show this subunit is required for basic activity. The polypeptide is DNA-directed RNA polymerase subunit Rpo7 (Sulfolobus acidocaldarius (strain ATCC 33909 / DSM 639 / JCM 8929 / NBRC 15157 / NCIMB 11770)).